We begin with the raw amino-acid sequence, 345 residues long: L-threonine 3-dehydrogenase (345 aa).

Cysteine 42 serves as a coordination point for Zn(2+). Active-site charge relay system residues include threonine 44 and histidine 47. Histidine 67, glutamate 68, cysteine 97, cysteine 100, cysteine 103, and cysteine 111 together coordinate Zn(2+). NAD(+) is bound by residues isoleucine 179, aspartate 199, arginine 204, 266–268 (LGI), and 290–291 (IY).

Belongs to the zinc-containing alcohol dehydrogenase family. In terms of assembly, homotetramer. The cofactor is Zn(2+).

It localises to the cytoplasm. It catalyses the reaction L-threonine + NAD(+) = (2S)-2-amino-3-oxobutanoate + NADH + H(+). It participates in amino-acid degradation; L-threonine degradation via oxydo-reductase pathway; glycine from L-threonine: step 1/2. Its function is as follows. Catalyzes the NAD(+)-dependent oxidation of L-threonine to 2-amino-3-ketobutyrate. The polypeptide is L-threonine 3-dehydrogenase (Rhizobium etli (strain CIAT 652)).